Here is a 194-residue protein sequence, read N- to C-terminus: Small ribosomal subunit protein uS4c (194 aa).

The S4 RNA-binding domain occupies 82–143 (MRLDNILFRL…KQRSKALIQD (62 aa)).

It belongs to the universal ribosomal protein uS4 family. In terms of assembly, part of the 30S ribosomal subunit. Contacts protein S5. The interaction surface between S4 and S5 is involved in control of translational fidelity.

Its subcellular location is the plastid. It is found in the chloroplast. Functionally, one of the primary rRNA binding proteins, it binds directly to 16S rRNA where it nucleates assembly of the body of the 30S subunit. In terms of biological role, with S5 and S12 plays an important role in translational accuracy. In Bobartia gladiata (Sword rush-lily), this protein is Small ribosomal subunit protein uS4c (rps4).